The sequence spans 427 residues: Ribose-phosphate pyrophosphokinase 1 (427 aa).

Mg(2+) is bound by residues Asp-128, His-130, and Asp-143. 4 positions are modified to phosphoserine: Ser-199, Ser-218, Ser-271, and Ser-295.

Belongs to the ribose-phosphate pyrophosphokinase family.

The protein resides in the cytoplasm. The enzyme catalyses D-ribose 5-phosphate + ATP = 5-phospho-alpha-D-ribose 1-diphosphate + AMP + H(+). It functions in the pathway metabolic intermediate biosynthesis; 5-phospho-alpha-D-ribose 1-diphosphate biosynthesis; 5-phospho-alpha-D-ribose 1-diphosphate from D-ribose 5-phosphate (route I): step 1/1. 5-phosphoribose 1-diphosphate synthase involved in nucleotide, histidine, and tryptophan biosynthesis. Active in heteromultimeric complexes with other 5-phosphoribose 1-diphosphate synthases (PRS2, PRS3, PRS4 and PRS5). This is Ribose-phosphate pyrophosphokinase 1 (PRS1) from Saccharomyces cerevisiae (strain ATCC 204508 / S288c) (Baker's yeast).